Consider the following 240-residue polypeptide: Proteasome subunit beta type-1 (240 aa).

Met-1 bears the N-acetylmethionine mark. A propeptide spanning residues 1–27 is cleaved from the precursor; it reads MLSTAAYRDPDRELVMGPQGSAGPVQM. The O-linked (GlcNAc) serine glycan is linked to Ser-57. 2 positions are modified to phosphoserine: Ser-61 and Ser-67. Tyr-149 carries the post-translational modification Phosphotyrosine. At Ser-161 the chain carries Phosphoserine. Lys-203 bears the N6-acetyllysine mark. A glycan (O-linked (GlcNAc) serine) is linked at Ser-208.

This sequence belongs to the peptidase T1B family. The 26S proteasome consists of a 20S proteasome core and two 19S regulatory subunits. The 20S proteasome core is a barrel-shaped complex made of 28 subunits that are arranged in four stacked rings. The two outer rings are each formed by seven alpha subunits, and the two inner rings are formed by seven beta subunits. The proteolytic activity is exerted by three beta-subunits PSMB5, PSMB6 and PSMB7. Interacts with SERPINB2. Interacts with RFPL4A. In terms of tissue distribution, ubiquitous.

The protein resides in the cytoplasm. It is found in the nucleus. Non-catalytic component of the 20S core proteasome complex involved in the proteolytic degradation of most intracellular proteins. This complex plays numerous essential roles within the cell by associating with different regulatory particles. Associated with two 19S regulatory particles, forms the 26S proteasome and thus participates in the ATP-dependent degradation of ubiquitinated proteins. The 26S proteasome plays a key role in the maintenance of protein homeostasis by removing misfolded or damaged proteins that could impair cellular functions, and by removing proteins whose functions are no longer required. Associated with the PA200 or PA28, the 20S proteasome mediates ubiquitin-independent protein degradation. This type of proteolysis is required in several pathways including spermatogenesis (20S-PA200 complex) or generation of a subset of MHC class I-presented antigenic peptides (20S-PA28 complex). In Rattus norvegicus (Rat), this protein is Proteasome subunit beta type-1 (Psmb1).